Reading from the N-terminus, the 409-residue chain is Protein PHOSPHATE STARVATION RESPONSE 1 (409 aa).

Residues 1-15 show a composition bias toward basic and acidic residues; that stretch reads MEARPVHRSGSRDLT. 3 disordered regions span residues 1–42, 86–108, and 178–226; these read MEAR…NSQL, EKQQ…NNDS, and ETNS…TGKA. Polar residues-rich tracts occupy residues 16–26 and 90–108; these read RTSSIPSTQKP and HYTG…NNDS. Over residues 192-224 the composition is skewed to low complexity; that stretch reads QIPQPQIVQQQPSPSVELRPVSTTSSNSNNGTG. In terms of domain architecture, HTH myb-type spans 222-282; sequence GTGKARMRWT…HLQKYRTARY (61 aa). The segment at residues 253-278 is a DNA-binding region (H-T-H motif); sequence PKGVLKIMKVEGLTIYHVKSHLQKYR. Residues 314–334 adopt a coiled-coil conformation; it reads TEALRLQMEVQKQLHEQLEIQ. An LHEQLE motif is present at residues 327–332; the sequence is LHEQLE. The segment covering 358 to 370 has biased composition (polar residues); it reads GLTKGTASTSDSA. A disordered region spans residues 358–409; it reads GLTKGTASTSDSAAKSEQEDKKTADSKEVPEEETRKCEELESPQPKRPKIDN. The span at 371–396 shows a compositional bias: basic and acidic residues; sequence AKSEQEDKKTADSKEVPEEETRKCEE. Residue serine 399 is modified to Phosphoserine.

It belongs to the MYB-CC family. In terms of assembly, homodimers and heterodimers. Interacts with SPX1 in a Pi-dependent manner. Does not interact with PHL2 or PHL3. In terms of processing, sumoylated by SIZ1. Sumoylation controls phosphate deficiency responses.

The protein localises to the nucleus. Functionally, transcription factor involved in phosphate starvation signaling. Binds as a dimer to P1BS, an imperfect palindromic sequence 5'-GNATATNC-3', to promote the expression of inorganic phosphate (Pi) starvation-responsive genes. SPX1 is a competitive inhibitor of this DNA-binding. PHR1 binding to its targets is low Pi-dependent. Regulates the expression of miR399. Regulates the expression of IPS1 (At3g09922), a non-coding RNA that mimics the target of miR399 to block the cleavage of PHO2 under Pi-deficient conditions. Regulates lipid remodeling and triacylglycerol accumulation during phosphorus starvation. Required for the shoot-specific hypoxic response. Regulates FER1 expression upon phosphate starvation, linking iron and phosphate homeostasis. Contributes to the homeostasis of both sulfate and phosphate in plants under phosphate deficiency. Required for adaptation to high light and retaining functional photosynthesis during phosphate starvation. Involved in the coregulation of Zn and Pi homeostasis. The chain is Protein PHOSPHATE STARVATION RESPONSE 1 from Arabidopsis thaliana (Mouse-ear cress).